We begin with the raw amino-acid sequence, 1503 residues long: EF-hand calcium-binding domain-containing protein 5 (1503 aa).

The disordered stretch occupies residues 1-23; the sequence is MNESASQEELRPAQENRKEDKER. Positions 8–23 are enriched in basic and acidic residues; that stretch reads EELRPAQENRKEDKER. Position 77 is a phosphoserine (Ser77). Disordered stretches follow at residues 477–518, 544–656, and 730–750; these read ASKT…EQGP, IEPG…QGPY, and FPETTKKEVQKDKPCEPKSQK. The segment covering 549–561 has biased composition (polar residues); that stretch reads HTESTLEQGSSRR. Composition is skewed to basic and acidic residues over residues 562 to 582 and 607 to 622; these read LLTEQETHRESTTEQGQHKGS and GSRRESIAEQDRHKGS. The EF-hand domain occupies 869-904; the sequence is RQRLLLEAIFQKWDSDGSGFLDLKEVDELLYTYKEG. Asp882, Asp884, Ser886, and Glu893 together coordinate Ca(2+).

The chain is EF-hand calcium-binding domain-containing protein 5 (EFCAB5) from Homo sapiens (Human).